A 147-amino-acid polypeptide reads, in one-letter code: Deoxyuridine 5'-triphosphate nucleotidohydrolase (147 aa).

Substrate contacts are provided by residues 67–69 (RSG), N80, and 84–86 (LID).

Belongs to the dUTPase family. Mg(2+) serves as cofactor.

The enzyme catalyses dUTP + H2O = dUMP + diphosphate + H(+). It functions in the pathway pyrimidine metabolism; dUMP biosynthesis; dUMP from dCTP (dUTP route): step 2/2. This enzyme is involved in nucleotide metabolism: it produces dUMP, the immediate precursor of thymidine nucleotides and it decreases the intracellular concentration of dUTP so that uracil cannot be incorporated into DNA. The protein is Deoxyuridine 5'-triphosphate nucleotidohydrolase of Gloeobacter violaceus (strain ATCC 29082 / PCC 7421).